The chain runs to 493 residues: Glutamate--tRNA ligase (493 aa).

Positions 10–20 (PSPTGDPHVGT) match the 'HIGH' region motif. The short motif at 251–255 (KLSKR) is the 'KMSKS' region element. Residue Lys254 coordinates ATP.

This sequence belongs to the class-I aminoacyl-tRNA synthetase family. Glutamate--tRNA ligase type 1 subfamily. In terms of assembly, monomer.

Its subcellular location is the cytoplasm. The enzyme catalyses tRNA(Glu) + L-glutamate + ATP = L-glutamyl-tRNA(Glu) + AMP + diphosphate. Functionally, catalyzes the attachment of glutamate to tRNA(Glu) in a two-step reaction: glutamate is first activated by ATP to form Glu-AMP and then transferred to the acceptor end of tRNA(Glu). This chain is Glutamate--tRNA ligase, found in Pseudomonas putida (strain ATCC 700007 / DSM 6899 / JCM 31910 / BCRC 17059 / LMG 24140 / F1).